The following is a 240-amino-acid chain: Phosphoribosylaminoimidazole-succinocarboxamide synthase (240 aa).

This sequence belongs to the SAICAR synthetase family.

It catalyses the reaction 5-amino-1-(5-phospho-D-ribosyl)imidazole-4-carboxylate + L-aspartate + ATP = (2S)-2-[5-amino-1-(5-phospho-beta-D-ribosyl)imidazole-4-carboxamido]succinate + ADP + phosphate + 2 H(+). It participates in purine metabolism; IMP biosynthesis via de novo pathway; 5-amino-1-(5-phospho-D-ribosyl)imidazole-4-carboxamide from 5-amino-1-(5-phospho-D-ribosyl)imidazole-4-carboxylate: step 1/2. The chain is Phosphoribosylaminoimidazole-succinocarboxamide synthase from Coxiella burnetii (strain RSA 493 / Nine Mile phase I).